Here is a 139-residue protein sequence, read N- to C-terminus: Small ribosomal subunit protein uS12 (139 aa).

This sequence belongs to the universal ribosomal protein uS12 family. As to quaternary structure, part of the 30S ribosomal subunit. Contacts proteins S8 and S17. May interact with IF1 in the 30S initiation complex.

Functionally, with S4 and S5 plays an important role in translational accuracy. Interacts with and stabilizes bases of the 16S rRNA that are involved in tRNA selection in the A site and with the mRNA backbone. Located at the interface of the 30S and 50S subunits, it traverses the body of the 30S subunit contacting proteins on the other side and probably holding the rRNA structure together. The combined cluster of proteins S8, S12 and S17 appears to hold together the shoulder and platform of the 30S subunit. The protein is Small ribosomal subunit protein uS12 of Mycoplasma pneumoniae (strain ATCC 29342 / M129 / Subtype 1) (Mycoplasmoides pneumoniae).